Consider the following 134-residue polypeptide: MRMLLHLSLLALGAAYVYAIPTEIPASALVKETLALLSTHRTLLIANETLRIPVPVHKNHQLCTEEIFQGIGTLESQTVQGGTVERLFKNLSLIKKYIGGQKKKCGEERRRVNQFLDYLQEFLGVMNTEWIIES.

The signal sequence occupies residues 1–19 (MRMLLHLSLLALGAAYVYA). O-linked (GalNAc...) threonine glycosylation occurs at threonine 22. N-linked (GlcNAc...) asparagine glycans are attached at residues asparagine 47 and asparagine 90.

It belongs to the IL-5 family. Homodimer; disulfide-linked. Interacts with IL5RA. Interacts with CSF2RB.

The protein resides in the secreted. In terms of biological role, homodimeric cytokine expressed predominantly by T-lymphocytes and NK cells that plays an important role in the survival, differentiation, and chemotaxis of eosinophils. Also acts on activated and resting B-cells to induce immunoglobulin production, growth, and differentiation. Mechanistically, exerts its biological effects through a receptor composed of IL5RA subunit and the cytokine receptor common subunit beta/CSF2RB. Binding to the receptor leads to activation of various kinases including LYN, SYK and JAK2 and thereby propagates signals through the RAS-MAPK and JAK-STAT5 pathways respectively. The sequence is that of Interleukin-5 (IL5) from Macaca mulatta (Rhesus macaque).